Here is a 1116-residue protein sequence, read N- to C-terminus: cGMP-specific 3',5'-cyclic phosphodiesterase (1116 aa).

Disordered regions lie at residues 1 to 36 (MTDV…NGAA) and 82 to 136 (KSEC…ATQQ). Residues 15 to 28 (VSSTSSEVAVETTS) are compositionally biased toward low complexity. Residues 86–136 (HSQSNNNQHVETAPSKQSSDSEASAPTTVSIPSANAKINSSSSGKTTATQQ) are compositionally biased toward polar residues. GAF domains are found at residues 241–393 (DIDV…GIGI) and 425–611 (NLEC…GLGI). The 324-residue stretch at 641-964 (SQDQTEKLAQ…RNWQDLAEKV (324 aa)) folds into the PDEase domain. Residue histidine 717 is the Proton donor of the active site. Positions 721, 757, 758, and 868 each coordinate a divalent metal cation. Disordered stretches follow at residues 1005-1031 (QHGG…LSIK) and 1067-1116 (HVSE…CALL). Basic and acidic residues-rich tracts occupy residues 1014-1023 (EDTHTPEHQR) and 1067-1076 (HVSEDMDDKS). Over residues 1085-1103 (SGSVGRMSASSSTSSAGTV) the composition is skewed to low complexity. A compositionally biased stretch (basic residues) spans 1106–1116 (SKKRSKLCALL). Position 1113 is a cysteine methyl ester (cysteine 1113). Cysteine 1113 is lipidated: S-farnesyl cysteine. Positions 1114 to 1116 (ALL) are cleaved as a propeptide — removed in mature form.

It belongs to the cyclic nucleotide phosphodiesterase family. In terms of assembly, interacts with PrBP. The cofactor is a divalent metal cation.

It localises to the cell membrane. It carries out the reaction 3',5'-cyclic GMP + H2O = GMP + H(+). Has a role regulating cGMP transport in Malpighian tubule principal cells. This chain is cGMP-specific 3',5'-cyclic phosphodiesterase, found in Drosophila mojavensis (Fruit fly).